We begin with the raw amino-acid sequence, 1353 residues long: Xanthine dehydrogenase 2 (1353 aa).

Positions 7–93 constitute a 2Fe-2S ferredoxin-type domain; sequence MEAIMYVNGV…GMHVISIEGV (87 aa). The [2Fe-2S] cluster site is built by C45, C50, C53, C75, C115, C118, C151, and C153. Positions 249-434 constitute an FAD-binding PCMH-type domain; it reads GGNEGITWYR…LSVFLPWTRP (186 aa). Residues 277 to 284, F357, 367 to 371, D380, L424, and K442 each bind FAD; these read LLVGNTEV and CIGGN. Positions 788 and 819 each coordinate Mo-molybdopterin. Positions 823 and 901 each coordinate substrate. Residue R933 participates in Mo-molybdopterin binding. Substrate-binding residues include F935 and T1031. Position 1100 (A1100) interacts with Mo-molybdopterin. Residue E1289 is the Proton acceptor of the active site.

Belongs to the xanthine dehydrogenase family. As to quaternary structure, homodimer. [2Fe-2S] cluster is required as a cofactor. Requires FAD as cofactor. The cofactor is Mo-molybdopterin. Expressed in roots, leaves, stems, flowers and siliques.

It catalyses the reaction xanthine + NAD(+) + H2O = urate + NADH + H(+). It carries out the reaction hypoxanthine + NAD(+) + H2O = xanthine + NADH + H(+). In terms of biological role, key enzyme involved in purine catabolism. Catalyzes the oxidation of hypoxanthine to xanthine and the oxidation of xanthine to urate. Regulates the level of ureides and plays a role during plant growth and development and senescence. This is Xanthine dehydrogenase 2 (XDH2) from Arabidopsis thaliana (Mouse-ear cress).